The following is a 353-amino-acid chain: Terpene synthase 1 (353 aa).

The DDxx(x)D/E motif signature appears at 81–86 (DDAIDA). Positions 222 to 230 (NDLVSYEKE) match the NDxxSxxxD/E motif motif.

Belongs to the terpene synthase family.

It catalyses the reaction (2E,6E)-farnesyl diphosphate = (2S,3R,6S,9S)-(-)-protoillud-7-ene + diphosphate. Functionally, terpene synthase that converts its substrate farnesyl diphosphate (FPP) into the sesquiterpene protoillud-7-ene. This chain is Terpene synthase 1, found in Tieghemostelium lacteum (Slime mold).